The following is a 242-amino-acid chain: Small ribosomal subunit protein uS3 (242 aa).

One can recognise a KH type-2 domain in the interval 39-109; that stretch reads IRQYVKATLA…QIRINVVEVT (71 aa). The interval 220 to 242 is disordered; that stretch reads KVNQPKRRQQKRRQQYDDRSNEG. A compositionally biased stretch (basic residues) spans 223 to 232; that stretch reads QPKRRQQKRR. The span at 233–242 shows a compositional bias: basic and acidic residues; it reads QQYDDRSNEG.

This sequence belongs to the universal ribosomal protein uS3 family. Part of the 30S ribosomal subunit. Forms a tight complex with proteins S10 and S14.

Its function is as follows. Binds the lower part of the 30S subunit head. Binds mRNA in the 70S ribosome, positioning it for translation. This Trichodesmium erythraeum (strain IMS101) protein is Small ribosomal subunit protein uS3.